A 453-amino-acid polypeptide reads, in one-letter code: Pup--protein ligase (453 aa).

Glu-9 is a binding site for Mg(2+). Arg-53 contacts ATP. Tyr-55 contacts Mg(2+). Catalysis depends on Asp-57, which acts as the Proton acceptor. Glu-63 lines the Mg(2+) pocket. ATP is bound by residues Thr-66 and Trp-420.

This sequence belongs to the Pup ligase/Pup deamidase family. Pup-conjugating enzyme subfamily.

The enzyme catalyses ATP + [prokaryotic ubiquitin-like protein]-L-glutamate + [protein]-L-lysine = ADP + phosphate + N(6)-([prokaryotic ubiquitin-like protein]-gamma-L-glutamyl)-[protein]-L-lysine.. Its pathway is protein degradation; proteasomal Pup-dependent pathway. It participates in protein modification; protein pupylation. Catalyzes the covalent attachment of the prokaryotic ubiquitin-like protein modifier Pup to the proteasomal substrate proteins, thereby targeting them for proteasomal degradation. This tagging system is termed pupylation. The ligation reaction involves the side-chain carboxylate of the C-terminal glutamate of Pup and the side-chain amino group of a substrate lysine. In Kineococcus radiotolerans (strain ATCC BAA-149 / DSM 14245 / SRS30216), this protein is Pup--protein ligase.